Consider the following 65-residue polypeptide: UPF0434 protein BBta_0300 (65 aa).

Belongs to the UPF0434 family.

The sequence is that of UPF0434 protein BBta_0300 from Bradyrhizobium sp. (strain BTAi1 / ATCC BAA-1182).